Here is a 523-residue protein sequence, read N- to C-terminus: 2-isopropylmalate synthase (523 aa).

The 263-residue stretch at 5-267 folds into the Pyruvate carboxyltransferase domain; sequence VIIFDTTLRD…HTAINHQEIW (263 aa). Mn(2+) contacts are provided by aspartate 14, histidine 202, histidine 204, and asparagine 238. Residues 392–523 form a regulatory domain region; the sequence is RLDYFSVQSG…QHNENNKETV (132 aa).

It belongs to the alpha-IPM synthase/homocitrate synthase family. LeuA type 1 subfamily. As to quaternary structure, homodimer. It depends on Mn(2+) as a cofactor.

It localises to the cytoplasm. The enzyme catalyses 3-methyl-2-oxobutanoate + acetyl-CoA + H2O = (2S)-2-isopropylmalate + CoA + H(+). Its pathway is amino-acid biosynthesis; L-leucine biosynthesis; L-leucine from 3-methyl-2-oxobutanoate: step 1/4. In terms of biological role, catalyzes the condensation of the acetyl group of acetyl-CoA with 3-methyl-2-oxobutanoate (2-ketoisovalerate) to form 3-carboxy-3-hydroxy-4-methylpentanoate (2-isopropylmalate). The protein is 2-isopropylmalate synthase of Shigella flexneri serotype 5b (strain 8401).